Reading from the N-terminus, the 127-residue chain is Snaclec CHH-B subunit alpha (127 aa).

Cystine bridges form between Cys-4-Cys-15, Cys-32-Cys-120, and Cys-95-Cys-112. Residues 11-121 (YDRYCYKPFK…CEQQHSFICK (111 aa)) form the C-type lectin domain.

Belongs to the snaclec family. As to quaternary structure, heterodimer of subunits alpha and beta; disulfide-linked. As to expression, expressed by the venom gland.

It localises to the secreted. In terms of biological role, binds to the subunit GPIbalpha (GP1BA) of the platelet GPIb/V/IX receptor system. It inhibits ristocetin- and vWF-induced platelet aggregation in platelet-rich plasma by inhibiting the binding of vWF to GPIbalpha. The protein is Snaclec CHH-B subunit alpha of Crotalus horridus (Timber rattlesnake).